A 280-amino-acid chain; its full sequence is Energy-coupling factor transporter ATP-binding protein EcfA1 (280 aa).

Positions 6–244 (IECKNVVYKY…VPLMKNIGLD (239 aa)) constitute an ABC transporter domain. 43 to 50 (GHNGSGKS) contributes to the ATP binding site.

This sequence belongs to the ABC transporter superfamily. Energy-coupling factor EcfA family. In terms of assembly, forms a stable energy-coupling factor (ECF) transporter complex composed of 2 membrane-embedded substrate-binding proteins (S component), 2 ATP-binding proteins (A component) and 2 transmembrane proteins (T component).

The protein localises to the cell membrane. In terms of biological role, ATP-binding (A) component of a common energy-coupling factor (ECF) ABC-transporter complex. Unlike classic ABC transporters this ECF transporter provides the energy necessary to transport a number of different substrates. The protein is Energy-coupling factor transporter ATP-binding protein EcfA1 of Clostridium novyi (strain NT).